Here is a 567-residue protein sequence, read N- to C-terminus: Type II secretion system protein E (567 aa).

Residue Gly-325–Thr-332 coordinates ATP.

The protein belongs to the GSP E family. Forms homooligomers; most probably hexamers. Interacts with XpsL/GspL.

It is found in the cell inner membrane. It carries out the reaction ATP + H2O + cellular proteinSide 1 = ADP + phosphate + cellular proteinSide 2.. Its function is as follows. ATPase component of the type II secretion system required for the energy-dependent secretion of extracellular factors such as proteases and toxins from the periplasm. Acts as a molecular motor to provide the energy that is required for assembly of the pseudopilus and the extrusion of substrates generated in the cytoplasm. This Xanthomonas campestris pv. campestris (strain ATCC 33913 / DSM 3586 / NCPPB 528 / LMG 568 / P 25) protein is Type II secretion system protein E (xpsE).